Reading from the N-terminus, the 282-residue chain is NADPH-dependent 7-cyano-7-deazaguanine reductase (282 aa).

88-90 (IES) contributes to the substrate binding site. An NADPH-binding site is contributed by 90–91 (SK). Cys-190 functions as the Thioimide intermediate in the catalytic mechanism. Asp-197 functions as the Proton donor in the catalytic mechanism. Substrate is bound at residue 229–230 (HE). 258 to 259 (RG) contacts NADPH.

It belongs to the GTP cyclohydrolase I family. QueF type 2 subfamily. As to quaternary structure, homodimer.

The protein localises to the cytoplasm. It carries out the reaction 7-aminomethyl-7-carbaguanine + 2 NADP(+) = 7-cyano-7-deazaguanine + 2 NADPH + 3 H(+). The protein operates within tRNA modification; tRNA-queuosine biosynthesis. Its function is as follows. Catalyzes the NADPH-dependent reduction of 7-cyano-7-deazaguanine (preQ0) to 7-aminomethyl-7-deazaguanine (preQ1). In Escherichia coli O45:K1 (strain S88 / ExPEC), this protein is NADPH-dependent 7-cyano-7-deazaguanine reductase.